Here is a 430-residue protein sequence, read N- to C-terminus: Histidine--tRNA ligase (430 aa).

The protein belongs to the class-II aminoacyl-tRNA synthetase family. As to quaternary structure, homodimer.

Its subcellular location is the cytoplasm. The catalysed reaction is tRNA(His) + L-histidine + ATP = L-histidyl-tRNA(His) + AMP + diphosphate + H(+). This chain is Histidine--tRNA ligase, found in Chlorobium limicola (strain DSM 245 / NBRC 103803 / 6330).